We begin with the raw amino-acid sequence, 113 residues long: uncharacterized protein (113 aa).

It to H.influenzae HI_1053 and P.denitrificans COX locus Uncharacterized protein 4.

This is an uncharacterized protein from Cupriavidus necator (strain ATCC 17699 / DSM 428 / KCTC 22496 / NCIMB 10442 / H16 / Stanier 337) (Ralstonia eutropha).